Consider the following 362-residue polypeptide: MLAAALMSAAFGAHAERLKDIASISGVRSNQLIGYGLVVGLNGTGDQTTQTPFTLQTFNNMLSQFGIKVPPGSGNVQLKNVAAVSVSADLPAFAKPGQQVDITVSSIGNSKSLRGGTLLLTPLKGIDGNVYAIAQGNLVVGGFDAEGRDGSKITVNVPSAGRIPGGASVERSVPSGFNQGNSLTLNLNRSDFTTAKRIVDKINDMLGPGVAQAIDGGSIRVTAPLDPSQRVDYLSILENLEVDPGQAVAKVIINSRTGTIVIGQNVKVSPAAVTHGSLTVTITEDPIVSQPGPLSNGQTAVVPRSRVNAEQEAKPMFKFGPGTTLDEIVRAVNQVGAAPGDLMAILEALKQAGALQADLIVI.

Residues 1 to 15 (MLAAALMSAAFGAHA) form the signal peptide.

It belongs to the FlgI family. In terms of assembly, the basal body constitutes a major portion of the flagellar organelle and consists of four rings (L,P,S, and M) mounted on a central rod.

Its subcellular location is the periplasm. The protein localises to the bacterial flagellum basal body. In terms of biological role, assembles around the rod to form the L-ring and probably protects the motor/basal body from shearing forces during rotation. The chain is Flagellar P-ring protein from Pseudomonas fluorescens (strain Pf0-1).